Here is a 1117-residue protein sequence, read N- to C-terminus: Protocadherin-11 X-linked (1117 aa).

A signal peptide spans 1-23; that stretch reads MDLLSGTHIFAVLLACIVFQSGA. The Extracellular portion of the chain corresponds to 24 to 812; that stretch reads QEKNYTIREE…ASSPSSDYVK (789 aa). Residues Asn-27 and Asn-48 are each glycosylated (N-linked (GlcNAc...) asparagine). 7 consecutive Cadherin domains span residues 27–139, 140–249, 250–355, 362–466, 467–570, 571–673, and 677–795; these read NYTI…APLF, PATV…RPVF, KENE…IPSI, NPIN…APVF, TQPF…SPVF, THNE…KPVF, and SSNY…TPVT. Residue Asn-344 is glycosylated (N-linked (GlcNAc...) asparagine). An N-linked (GlcNAc...) asparagine glycan is attached at Asn-553. Residues 813–833 form a helical membrane-spanning segment; sequence IVVAIVAGTITVILVIFITAV. Over 834–1117 the chain is Cytoplasmic; it reads VRCQQSPHLK…DGNSDPESGK (284 aa). The span at 1029–1039 shows a compositional bias: polar residues; the sequence is TVEIWTHPQPQ. Residues 1029–1117 form a disordered region; sequence TVEIWTHPQP…DGNSDPESGK (89 aa).

In terms of tissue distribution, expressed in adrenal gland, brain, heart, kidney, lung, prostate, skeletal muscle, testis and thymus.

The protein resides in the cell membrane. Its function is as follows. Potential calcium-dependent cell-adhesion protein. This Sus scrofa (Pig) protein is Protocadherin-11 X-linked (PCDH11X).